The following is a 500-amino-acid chain: NAD(P)H-quinone oxidoreductase chain 4, chloroplastic (500 aa).

14 helical membrane passes run 4–24 (FPWLTIIVVFPIFAGSLIFFL), 37–57 (ICICILELLLTTYAFCYHFQL), 87–107 (IGPILLTGFITTLATLAAWPI), 113–130 (LFHFIMLAMYSGQIGSFS), 134–154 (LLLFFIMWELELIPVYLLLAM), 167–187 (FILYTAGGSVFLLMGVLGVAL), 208–228 (VLEIIFYIGFFIAFAVKLPII), 242–262 (HYSTCMLLAGILLKMGAYGLI), 272–292 (AHSIFSPWLMIIGTIQIIYAA), 305–325 (IAYSSVSHMGFIIIGISSLTD), 330–350 (GALLQIISHGFIGAALFFLAG), 386–406 (LALPGMSGFVAELIVFFGIIT), 411–431 (VLIPKILITFVMAIGMILTPI), and 462–482 (LFLSISIFLPVIGIGIYPDFV).

This sequence belongs to the complex I subunit 4 family.

The protein localises to the plastid. Its subcellular location is the chloroplast thylakoid membrane. It catalyses the reaction a plastoquinone + NADH + (n+1) H(+)(in) = a plastoquinol + NAD(+) + n H(+)(out). It carries out the reaction a plastoquinone + NADPH + (n+1) H(+)(in) = a plastoquinol + NADP(+) + n H(+)(out). This chain is NAD(P)H-quinone oxidoreductase chain 4, chloroplastic, found in Atropa belladonna (Belladonna).